Here is a 155-residue protein sequence, read N- to C-terminus: Ribosomal RNA large subunit methyltransferase H (155 aa).

S-adenosyl-L-methionine is bound by residues leucine 72, glycine 103, and leucine 122 to tryptophan 127.

This sequence belongs to the RNA methyltransferase RlmH family. Homodimer.

The protein localises to the cytoplasm. The enzyme catalyses pseudouridine(1915) in 23S rRNA + S-adenosyl-L-methionine = N(3)-methylpseudouridine(1915) in 23S rRNA + S-adenosyl-L-homocysteine + H(+). Functionally, specifically methylates the pseudouridine at position 1915 (m3Psi1915) in 23S rRNA. The polypeptide is Ribosomal RNA large subunit methyltransferase H (Cereibacter sphaeroides (strain KD131 / KCTC 12085) (Rhodobacter sphaeroides)).